The primary structure comprises 350 residues: tRNA uridine(34) hydroxylase (350 aa).

A Rhodanese domain is found at 146–240 (DDPDAVFIDM…YARRAREQGL (95 aa)). The active-site Cysteine persulfide intermediate is the C200. Over residues 319–328 (RRRRAGRENG) the composition is skewed to basic and acidic residues. Residues 319 to 350 (RRRRAGRENGNKIFNKSRGRLNSKLSIPDPAE) form a disordered region.

The protein belongs to the TrhO family.

The enzyme catalyses uridine(34) in tRNA + AH2 + O2 = 5-hydroxyuridine(34) in tRNA + A + H2O. In terms of biological role, catalyzes oxygen-dependent 5-hydroxyuridine (ho5U) modification at position 34 in tRNAs. This is tRNA uridine(34) hydroxylase from Salmonella typhi.